The primary structure comprises 517 residues: MQNNIIIFDTTLRDGEQALKASLTVKEKLQIALALERLGVDVMEVGFPVSSAGDFESVQTIARHIKNSRVCALSRAVDKDIDIAADALKVAEAFRIHTFIATSALHVEAKLRRTFDDVVEMAIQAVKRARRYTDDVEFSCEDAGRTGVDNICRIVEAAIKAGATTVNIPDTVGFCLPTEYGNIIDQVMNRVPNIDKAVISVHCHNDLGMATANSLTAVQNGARQIECTINGIGERAGNTALEEVVMAIKTRQDIFKGLDTRINTQEIHRVSQMVSQLCNMPIQPNKAIVGSNAFAHSSGIHQDGMVKNKNTYEIMSPETIGLKKEKLNLTARSGRAAVKSHMDAMGYQQNDYDLDKLYAAFLKLADKKGQVFDYDLEALAFIDMQQGDEDRLSLDVITSQTISNLPASAFVQVELDGKKISQVSNGGNGPVDAVYNAILAITDMDITMLHYNLTAKGEGAEALGQVDIVVEHKGRRFHGVGLATDIVESSARALIHAINAIYRANKVADLKSHKISQ.

The Pyruvate carboxyltransferase domain occupies 5 to 268 (IIIFDTTLRD…DTRINTQEIH (264 aa)). Mn(2+)-binding residues include D14, H202, H204, and N238. Residues 393–517 (SLDVITSQTI…ADLKSHKISQ (125 aa)) form a regulatory domain region.

Belongs to the alpha-IPM synthase/homocitrate synthase family. LeuA type 1 subfamily. In terms of assembly, homodimer. Mn(2+) serves as cofactor.

The protein resides in the cytoplasm. The catalysed reaction is 3-methyl-2-oxobutanoate + acetyl-CoA + H2O = (2S)-2-isopropylmalate + CoA + H(+). It participates in amino-acid biosynthesis; L-leucine biosynthesis; L-leucine from 3-methyl-2-oxobutanoate: step 1/4. Catalyzes the condensation of the acetyl group of acetyl-CoA with 3-methyl-2-oxobutanoate (2-ketoisovalerate) to form 3-carboxy-3-hydroxy-4-methylpentanoate (2-isopropylmalate). The protein is 2-isopropylmalate synthase of Histophilus somni (strain 2336) (Haemophilus somnus).